Reading from the N-terminus, the 278-residue chain is 2-dehydro-3-deoxyphosphooctonate aldolase (278 aa).

It belongs to the KdsA family.

It is found in the cytoplasm. It carries out the reaction D-arabinose 5-phosphate + phosphoenolpyruvate + H2O = 3-deoxy-alpha-D-manno-2-octulosonate-8-phosphate + phosphate. It functions in the pathway carbohydrate biosynthesis; 3-deoxy-D-manno-octulosonate biosynthesis; 3-deoxy-D-manno-octulosonate from D-ribulose 5-phosphate: step 2/3. The protein operates within bacterial outer membrane biogenesis; lipopolysaccharide biosynthesis. The chain is 2-dehydro-3-deoxyphosphooctonate aldolase from Bartonella quintana (strain Toulouse) (Rochalimaea quintana).